The primary structure comprises 77 residues: U8-lycotoxin-Ls1d (77 aa).

The N-terminal stretch at Met1–Ala20 is a signal peptide. Positions Gln21–Lys26 are excised as a propeptide.

This sequence belongs to the neurotoxin 19 (CSTX) family. 08 (U8-Lctx) subfamily. Post-translationally, contains 4 disulfide bonds. Expressed by the venom gland.

The protein resides in the secreted. In Lycosa singoriensis (Wolf spider), this protein is U8-lycotoxin-Ls1d.